Reading from the N-terminus, the 287-residue chain is L-cysteine S-thiosulfotransferase subunit SoxA (287 aa).

An N-terminal signal peptide occupies residues 1–26 (MKTMTGRLVAAALVCGGAFSGAAVSA). The Cytochrome c domain occupies 74 to 168 (DDFENSGMVF…AMVALIASVS (95 aa)). Heme c is bound by residues Cys-102, Cys-105, His-106, Cys-140, Cys-203, Cys-206, and His-207. Residue Arg-244 participates in substrate binding. Cys-248 lines the heme c pocket. The Cysteine persulfide intermediate role is filled by Cys-248.

Belongs to the SoxA family. Heterodimer of SoxA and SoxX. Requires heme c as cofactor. Cysteine persulfide at Cys-248.

Its subcellular location is the periplasm. It carries out the reaction L-cysteinyl-[SoxY protein] + thiosulfate + 2 Fe(III)-[cytochrome c] = S-sulfosulfanyl-L-cysteinyl-[SoxY protein] + 2 Fe(II)-[cytochrome c] + 2 H(+). The enzyme catalyses S-sulfanyl-L-cysteinyl-[SoxY protein] + thiosulfate + 2 Fe(III)-[cytochrome c] = S-(2-sulfodisulfanyl)-L-cysteinyl-[SoxY protein] + 2 Fe(II)-[cytochrome c] + 2 H(+). In terms of biological role, C-type diheme cytochrome, which is part of the SoxAX cytochrome complex involved in sulfur oxidation. The SoxAX complex catalyzes the formation of a heterodisulfide bond between the conserved cysteine residue on a sulfur carrier SoxYZ complex subunit SoxY and thiosulfate or other inorganic sulfur substrates. This leads to the liberation of two electrons, which may be transferred from the SoxAX complex to another cytochrome c and which then may be used for reductive CO(2) fixation. The chain is L-cysteine S-thiosulfotransferase subunit SoxA from Rhodovulum sulfidophilum (Rhodobacter sulfidophilus).